Consider the following 264-residue polypeptide: Hemin import ATP-binding protein HmuV (264 aa).

One can recognise an ABC transporter domain in the interval 2–241 (IEVSGVSVRL…ETMLSVFGLR (240 aa)). 34–41 (GPNGSGKT) is an ATP binding site.

The protein belongs to the ABC transporter superfamily. Heme (hemin) importer (TC 3.A.1.14.5) family. As to quaternary structure, the complex is composed of two ATP-binding proteins (HmuV), two transmembrane proteins (HmuU) and a solute-binding protein (HmuT).

It localises to the cell inner membrane. Functionally, part of the ABC transporter complex HmuTUV involved in hemin import. Responsible for energy coupling to the transport system. This is Hemin import ATP-binding protein HmuV from Rhizobium leguminosarum.